The following is an 86-amino-acid chain: Small ribosomal subunit protein uS17 (86 aa).

It belongs to the universal ribosomal protein uS17 family. Part of the 30S ribosomal subunit.

Its function is as follows. One of the primary rRNA binding proteins, it binds specifically to the 5'-end of 16S ribosomal RNA. This Exiguobacterium sp. (strain ATCC BAA-1283 / AT1b) protein is Small ribosomal subunit protein uS17.